Reading from the N-terminus, the 288-residue chain is Diaminopimelate epimerase (288 aa).

Residues Asn-14 and Asn-67 each coordinate substrate. Cys-76 serves as the catalytic Proton donor. Substrate-binding positions include 77–78, Asn-166, Asn-199, and 217–218; these read GN and ER. The active-site Proton acceptor is Cys-226. Residue 227 to 228 participates in substrate binding; it reads GT.

It belongs to the diaminopimelate epimerase family. As to quaternary structure, homodimer.

The protein resides in the cytoplasm. It catalyses the reaction (2S,6S)-2,6-diaminopimelate = meso-2,6-diaminopimelate. It participates in amino-acid biosynthesis; L-lysine biosynthesis via DAP pathway; DL-2,6-diaminopimelate from LL-2,6-diaminopimelate: step 1/1. Its function is as follows. Catalyzes the stereoinversion of LL-2,6-diaminopimelate (L,L-DAP) to meso-diaminopimelate (meso-DAP), a precursor of L-lysine and an essential component of the bacterial peptidoglycan. The chain is Diaminopimelate epimerase from Bacillus mycoides (strain KBAB4) (Bacillus weihenstephanensis).